The following is a 364-amino-acid chain: UDP-N-acetylglucosamine--N-acetylmuramyl-(pentapeptide) pyrophosphoryl-undecaprenol N-acetylglucosamine transferase (364 aa).

UDP-N-acetyl-alpha-D-glucosamine contacts are provided by residues 13-15 (TGG), Asn-125, Arg-165, Ser-192, and Gln-293.

It belongs to the glycosyltransferase 28 family. MurG subfamily.

The protein resides in the cell inner membrane. It carries out the reaction di-trans,octa-cis-undecaprenyl diphospho-N-acetyl-alpha-D-muramoyl-L-alanyl-D-glutamyl-meso-2,6-diaminopimeloyl-D-alanyl-D-alanine + UDP-N-acetyl-alpha-D-glucosamine = di-trans,octa-cis-undecaprenyl diphospho-[N-acetyl-alpha-D-glucosaminyl-(1-&gt;4)]-N-acetyl-alpha-D-muramoyl-L-alanyl-D-glutamyl-meso-2,6-diaminopimeloyl-D-alanyl-D-alanine + UDP + H(+). It functions in the pathway cell wall biogenesis; peptidoglycan biosynthesis. Functionally, cell wall formation. Catalyzes the transfer of a GlcNAc subunit on undecaprenyl-pyrophosphoryl-MurNAc-pentapeptide (lipid intermediate I) to form undecaprenyl-pyrophosphoryl-MurNAc-(pentapeptide)GlcNAc (lipid intermediate II). The protein is UDP-N-acetylglucosamine--N-acetylmuramyl-(pentapeptide) pyrophosphoryl-undecaprenol N-acetylglucosamine transferase of Cereibacter sphaeroides (strain ATCC 17025 / ATH 2.4.3) (Rhodobacter sphaeroides).